Here is a 1241-residue protein sequence, read N- to C-terminus: ATP-dependent helicase/nuclease subunit A (1241 aa).

Positions 12 to 485 constitute a UvrD-like helicase ATP-binding domain; sequence SQWTDDQWKA…IDLAKNFRSR (474 aa). 33-40 contacts ATP; the sequence is AAAGSGKT. Residues 505-805 form the UvrD-like helicase C-terminal domain; sequence GEIDYDADAE…RIMTIHKSKG (301 aa).

This sequence belongs to the helicase family. AddA subfamily. As to quaternary structure, heterodimer of AddA and AddB/RexB. It depends on Mg(2+) as a cofactor.

It catalyses the reaction Couples ATP hydrolysis with the unwinding of duplex DNA by translocating in the 3'-5' direction.. The enzyme catalyses ATP + H2O = ADP + phosphate + H(+). Its function is as follows. The heterodimer acts as both an ATP-dependent DNA helicase and an ATP-dependent, dual-direction single-stranded exonuclease. Recognizes the chi site generating a DNA molecule suitable for the initiation of homologous recombination. The AddA nuclease domain is required for chi fragment generation; this subunit has the helicase and 3' -&gt; 5' nuclease activities. The protein is ATP-dependent helicase/nuclease subunit A of Bacillus thuringiensis (strain Al Hakam).